A 248-amino-acid chain; its full sequence is 3-deoxy-manno-octulosonate cytidylyltransferase (248 aa).

Belongs to the KdsB family.

It is found in the cytoplasm. It carries out the reaction 3-deoxy-alpha-D-manno-oct-2-ulosonate + CTP = CMP-3-deoxy-beta-D-manno-octulosonate + diphosphate. It participates in nucleotide-sugar biosynthesis; CMP-3-deoxy-D-manno-octulosonate biosynthesis; CMP-3-deoxy-D-manno-octulosonate from 3-deoxy-D-manno-octulosonate and CTP: step 1/1. Its pathway is bacterial outer membrane biogenesis; lipopolysaccharide biosynthesis. Activates KDO (a required 8-carbon sugar) for incorporation into bacterial lipopolysaccharide in Gram-negative bacteria. This Chlorobaculum parvum (strain DSM 263 / NCIMB 8327) (Chlorobium vibrioforme subsp. thiosulfatophilum) protein is 3-deoxy-manno-octulosonate cytidylyltransferase.